We begin with the raw amino-acid sequence, 707 residues long: Transcription termination factor Rho (707 aa).

Disordered regions lie at residues 1 to 38 (MSDTTDLMGARVEETAAAPATDASAPATGAGSRRRRGT) and 76 to 321 (QAAG…DEIQ). 2 stretches are compositionally biased toward low complexity: residues 16-31 (AAAPATDASAPATGAG) and 76-93 (QAAGGAPAKAAPAAADTA). Basic and acidic residues predominate over residues 107–132 (RTGDEAPAEKAEKAGKADKKADKAAA). Residues 153-163 (ASAEQAAPADD) show a composition bias toward low complexity. Residues 176–188 (DAGSPSATDTTVA) show a composition bias toward polar residues. The segment covering 203–213 (QQSQGHQQGQG) has biased composition (low complexity). The segment covering 215–265 (ARSDAEGGDGRRRDRRDRGDRDRGDRGDRGDRGDRGDRGERGRDRRNKGDD) has biased composition (basic and acidic residues). Residues 301–315 (RRGRRGRYRDRRGRR) show a composition bias toward basic residues. One can recognise a Rho RNA-BD domain in the interval 331 to 406 (LIPVAGILDI…VRLDSVNGMA (76 aa)). Residues 449–454 (GKGQRG), 461–466 (KTGKTM), and Arg492 contribute to the ATP site.

The protein belongs to the Rho family. Homohexamer. The homohexamer assembles into an open ring structure.

In terms of biological role, facilitates transcription termination by a mechanism that involves Rho binding to the nascent RNA, activation of Rho's RNA-dependent ATPase activity, and release of the mRNA from the DNA template. The sequence is that of Transcription termination factor Rho from Streptomyces lividans.